The following is a 145-amino-acid chain: D-aminoacyl-tRNA deacylase (145 aa).

Positions 137–138 (GP) match the Gly-cisPro motif, important for rejection of L-amino acids motif.

It belongs to the DTD family. Homodimer.

Its subcellular location is the cytoplasm. The catalysed reaction is glycyl-tRNA(Ala) + H2O = tRNA(Ala) + glycine + H(+). It carries out the reaction a D-aminoacyl-tRNA + H2O = a tRNA + a D-alpha-amino acid + H(+). An aminoacyl-tRNA editing enzyme that deacylates mischarged D-aminoacyl-tRNAs. Also deacylates mischarged glycyl-tRNA(Ala), protecting cells against glycine mischarging by AlaRS. Acts via tRNA-based rather than protein-based catalysis; rejects L-amino acids rather than detecting D-amino acids in the active site. By recycling D-aminoacyl-tRNA to D-amino acids and free tRNA molecules, this enzyme counteracts the toxicity associated with the formation of D-aminoacyl-tRNA entities in vivo and helps enforce protein L-homochirality. The chain is D-aminoacyl-tRNA deacylase from Pseudomonas syringae pv. tomato (strain ATCC BAA-871 / DC3000).